The primary structure comprises 132 residues: MSTKYVEVGELKEGSYVVIDGEPCRVVEIEKSKTGKHGSAKARIVAIGVFDGGKRTLSLPVDAQIEVPIIEKFTAQVLSISGNVIQLMDMRDYKTIEVPIDYVEEEAKGRLAPGVEVEVWQILNRYKITRVK.

K36 carries the hypusine modification.

It belongs to the eIF-5A family.

The protein resides in the cytoplasm. Its function is as follows. Functions by promoting the formation of the first peptide bond. The sequence is that of Translation initiation factor 5A (eIF5A) from Pyrobaculum islandicum (strain DSM 4184 / JCM 9189 / GEO3).